Here is a 550-residue protein sequence, read N- to C-terminus: MVGEEKMSLRNRLSKSRENPEEDEDQRKPAKESLEAPSNGRIDIKQLIAKKIKLTAEAEELKPFFMKEVGSHFDDFVTNLIEKSASLDNGGCALTTFSILEGEKNNHRAKDLRAPPEQGKIFIARRSLLDELLEVDHIRTIYHMFIALLILFILSTLVVDYIDEGRLVLEFSLLSYAFGKFPTVVWTWWIMFLSTFSVPYFLFQRWATGYSKSSHPLINSLFHGFLFMVFQIGILGFGPTYVVLAYTLPPASRFIIIFEQIRFVMKAHSFVRENVPRVLNSAKEKSSTVPIPTVNQYLYFLFAPTLIYRDSYPRNPTVRWGYVAMQFAQVFGCFFYVYYIFERLCAPLFRNIKQEPFSARVLVLCVFNSILPGVLILFLTFFAFLHCWLNAFAEMLRFGDRMFYKDWWNSTSYSNYYRTWNVVVHDWLYYYAYKDFLWFFSKRFKSAAMLAVFAVSAVVHEYALAVCLSFFYPVLFVLFMFFGMAFNFIVNDSRKKPIWNVMMWTSLFLGNGVLLCFYSQEWYARQHCPLKNPTFLDYVRPRSWTCRYVF.

Residue Met-1 is modified to N-acetylmethionine. The tract at residues 1–36 (MVGEEKMSLRNRLSKSRENPEEDEDQRKPAKESLEA) is disordered. Over 1 to 138 (MVGEEKMSLR…LDELLEVDHI (138 aa)) the chain is Cytoplasmic. Ser-8 bears the Phosphoserine mark. The span at 15–34 (KSRENPEEDEDQRKPAKESL) shows a compositional bias: basic and acidic residues. Residue His-137 coordinates cholesterol. A helical transmembrane segment spans residues 139 to 160 (RTIYHMFIALLILFILSTLVVD). Residues 161 to 180 (YIDEGRLVLEFSLLSYAFGK) are Lumenal-facing. Residues 181–206 (FPTVVWTWWIMFLSTFSVPYFLFQRW) traverse the membrane as a helical segment. Residues 207–218 (ATGYSKSSHPLI) are Cytoplasmic-facing. Residues 219–244 (NSLFHGFLFMVFQIGILGFGPTYVVL) form a helical membrane-spanning segment. The Lumenal portion of the chain corresponds to 245–252 (AYTLPPAS). A helical transmembrane segment spans residues 253-276 (RFIIIFEQIRFVMKAHSFVRENVP). The Cytoplasmic segment spans residues 277-319 (RVLNSAKEKSSTVPIPTVNQYLYFLFAPTLIYRDSYPRNPTVR). A helical transmembrane segment spans residues 320-352 (WGYVAMQFAQVFGCFFYVYYIFERLCAPLFRNI). Topologically, residues 353-369 (KQEPFSARVLVLCVFNS) are lumenal. Residues 370–395 (ILPGVLILFLTFFAFLHCWLNAFAEM) form a helical membrane-spanning segment. The Cytoplasmic segment spans residues 396 to 443 (LRFGDRMFYKDWWNSTSYSNYYRTWNVVVHDWLYYYAYKDFLWFFSKR). An FYXDWWN motif motif is present at residues 403–409 (FYKDWWN). An acyl-CoA contacts are provided by Asn-415, Arg-418, Asn-421, His-425, Tyr-433, Lys-445, and Ser-456. A helical transmembrane segment spans residues 444-468 (FKSAAMLAVFAVSAVVHEYALAVCL). The active site involves His-460. The Lumenal portion of the chain corresponds to 469-474 (SFFYPV). Residues 475 to 490 (LFVLFMFFGMAFNFIV) traverse the membrane as a helical segment. At 491 to 496 (NDSRKK) the chain is on the cytoplasmic side. Residues 497 to 528 (PIWNVMMWTSLFLGNGVLLCFYSQEWYARQHC) traverse the membrane as a helical segment. A disulfide bond links Cys-528 and Cys-546. Residues 529 to 550 (PLKNPTFLDYVRPRSWTCRYVF) lie on the Lumenal side of the membrane.

It belongs to the membrane-bound acyltransferase family. Sterol o-acyltransferase subfamily. As to quaternary structure, may form homo- or heterodimers. Interacts with UBIAD1. In terms of tissue distribution, expressed in most tissues, but most strongly in the adrenal gland. Expressed more strongly in liver Kupffer cells than in hepatocytes.

It localises to the endoplasmic reticulum membrane. The enzyme catalyses a sterol + a long-chain fatty acyl-CoA = a long-chain 3-hydroxysterol ester + CoA. It catalyses the reaction cholesterol + an acyl-CoA = a cholesterol ester + CoA. The catalysed reaction is cholesterol + (9Z)-octadecenoyl-CoA = cholesteryl (9Z-octadecenoate) + CoA. It carries out the reaction cholesterol + hexadecanoyl-CoA = cholesteryl hexadecanoate + CoA. The enzyme catalyses octadecanoyl-CoA + cholesterol = cholesteryl octadecanoate + CoA. It catalyses the reaction (9Z,12Z)-octadecadienoyl-CoA + cholesterol = cholesteryl (9Z,12Z)-octadecadienoate + CoA. The catalysed reaction is (5Z,8Z,11Z,14Z)-eicosatetraenoyl-CoA + cholesterol = cholesteryl (5Z,8Z,11Z,14Z)-eicosatetraenoate + CoA. It carries out the reaction (9Z)-hexadecenoyl-CoA + cholesterol = cholesteryl (9Z)-hexadecenoate + CoA. The enzyme catalyses (11Z)-octadecenoyl-CoA + cholesterol = cholesteryl (11Z)-octadecenoate + CoA. It catalyses the reaction (7Z)-octadecenoyl-CoA + cholesterol = cholesteryl (7Z)-octadecenoate + CoA. Its function is as follows. Catalyzes the formation of fatty acid-cholesterol esters, which are less soluble in membranes than cholesterol. Plays a role in lipoprotein assembly and dietary cholesterol absorption. Preferentially utilizes oleoyl-CoA ((9Z)-octadecenoyl-CoA) as a substrate: shows a higher activity towards an acyl-CoA substrate with a double bond at the delta-9 position (9Z) than towards saturated acyl-CoA or an unsaturated acyl-CoA with a double bond at the delta-7 (7Z) or delta-11 (11Z) positions. The polypeptide is Sterol O-acyltransferase 1 (SOAT1) (Chlorocebus aethiops (Green monkey)).